A 48-amino-acid polypeptide reads, in one-letter code: Palustrin-3b (48 aa).

C43 and C48 are disulfide-bonded.

Expressed by the skin glands.

It localises to the secreted. In terms of biological role, antimicrobial activity against Gram-negative bacterium E.coli. The sequence is that of Palustrin-3b from Lithobates palustris (Pickerel frog).